Consider the following 85-residue polypeptide: Large ribosomal subunit protein bL27 (85 aa).

Residues 1-10 (MAQKKGGGST) show a composition bias toward gly residues. The disordered stretch occupies residues 1–21 (MAQKKGGGSTRNGRDSQPKML).

The protein belongs to the bacterial ribosomal protein bL27 family.

The sequence is that of Large ribosomal subunit protein bL27 from Polaromonas naphthalenivorans (strain CJ2).